Reading from the N-terminus, the 271-residue chain is Hydroxyethylthiazole kinase (271 aa).

Met-46 contacts substrate. Residues Arg-122 and Thr-169 each contribute to the ATP site. Gly-196 provides a ligand contact to substrate.

Belongs to the Thz kinase family. Mg(2+) is required as a cofactor.

It catalyses the reaction 5-(2-hydroxyethyl)-4-methylthiazole + ATP = 4-methyl-5-(2-phosphooxyethyl)-thiazole + ADP + H(+). The protein operates within cofactor biosynthesis; thiamine diphosphate biosynthesis; 4-methyl-5-(2-phosphoethyl)-thiazole from 5-(2-hydroxyethyl)-4-methylthiazole: step 1/1. Its function is as follows. Catalyzes the phosphorylation of the hydroxyl group of 4-methyl-5-beta-hydroxyethylthiazole (THZ). In Alkaliphilus oremlandii (strain OhILAs) (Clostridium oremlandii (strain OhILAs)), this protein is Hydroxyethylthiazole kinase.